We begin with the raw amino-acid sequence, 144 residues long: 3-hydroxyacyl-[acyl-carrier-protein] dehydratase FabZ (144 aa).

Histidine 48 is a catalytic residue.

Belongs to the thioester dehydratase family. FabZ subfamily.

It is found in the cytoplasm. The catalysed reaction is a (3R)-hydroxyacyl-[ACP] = a (2E)-enoyl-[ACP] + H2O. Its function is as follows. Involved in unsaturated fatty acids biosynthesis. Catalyzes the dehydration of short chain beta-hydroxyacyl-ACPs and long chain saturated and unsaturated beta-hydroxyacyl-ACPs. This is 3-hydroxyacyl-[acyl-carrier-protein] dehydratase FabZ from Bacillus cereus (strain AH187).